We begin with the raw amino-acid sequence, 475 residues long: Glycogen synthase (475 aa).

Lys-15 lines the ADP-alpha-D-glucose pocket.

This sequence belongs to the glycosyltransferase 1 family. Bacterial/plant glycogen synthase subfamily.

It catalyses the reaction [(1-&gt;4)-alpha-D-glucosyl](n) + ADP-alpha-D-glucose = [(1-&gt;4)-alpha-D-glucosyl](n+1) + ADP + H(+). It functions in the pathway glycan biosynthesis; glycogen biosynthesis. In terms of biological role, synthesizes alpha-1,4-glucan chains using ADP-glucose. In Anaeromyxobacter sp. (strain K), this protein is Glycogen synthase.